The chain runs to 266 residues: MTMEVDILELSDRSAKFVLSRVSMAFANGVRRAMIADVPTLAIEYVNLYDNTSVLYDEQLALRLSLIPLVTDIETYMPQAECEVCGGEGCPACEVSLTLSAEGPGTVYSRDLISSDPKIQPADPNIPIVELKKGQKLVLEAIAHMGYGRDSVKWQAGVACGYKNVPVITIENCDACGHCAAECPKGIIRVEEAGARIAEDDLIKCSLCRLCEQVCDINAIKVDFYENAFVFTMESDGSYTAKDLTINAANVIKGKAEELLAILDQL.

Residues Cys205, Cys208, and Cys211 each contribute to the [3Fe-4S] cluster site.

This sequence belongs to the archaeal Rpo3/eukaryotic RPB3 RNA polymerase subunit family. Part of the RNA polymerase complex. [3Fe-4S] cluster is required as a cofactor.

The protein localises to the cytoplasm. It catalyses the reaction RNA(n) + a ribonucleoside 5'-triphosphate = RNA(n+1) + diphosphate. DNA-dependent RNA polymerase (RNAP) catalyzes the transcription of DNA into RNA using the four ribonucleoside triphosphates as substrates. This chain is DNA-directed RNA polymerase subunit Rpo3, found in Methanosarcina mazei (strain ATCC BAA-159 / DSM 3647 / Goe1 / Go1 / JCM 11833 / OCM 88) (Methanosarcina frisia).